Here is an 878-residue protein sequence, read N- to C-terminus: Longitudinals lacking protein, isoforms N/O/W/X/Y (878 aa).

The BTB domain maps to 32–97; the sequence is VDCTLAAEGK…MYRGEVNISQ (66 aa). Disordered stretches follow at residues 115–200, 228–340, and 542–583; these read LSDN…SSVL, SSGP…ASAS, and QIVK…QTHA. 5 stretches are compositionally biased toward low complexity: residues 162-175, 228-251, 263-293, 329-340, and 546-569; these read SGDVSGSREGSSSP, SSGPAAGTSSQASSTQQQQPLTST, TSSTAAPASGASASAAVQQAHLHQQQAQTTS, NSATGPNPASAS, and QQHQQQHQQQHQHPQQQHQPQQQQ. A C2H2-type 1; degenerate zinc finger spans residues 709 to 731; that stretch reads YACNVCGKTYKIKGSLKRHKNYE. Residues 794–816 form a C2H2-type 2 zinc finger; that stretch reads FQCDFCLKWFKRRSHLNRHKKLH. The tract at residues 826–863 is disordered; the sequence is SKQKPKTTSGQNLSHDANTDDEVATTNPAATEDESNYP. Over residues 831 to 841 the composition is skewed to polar residues; it reads KTTSGQNLSHD.

By stage 11, isoform W, isoform X and isoform Y are expressed throughout the mesoderm, whereas isoform O is expressed in both mesoderm and ectoderm. From stage 15, expression of isoform O expands to all tissues, whereas expression of isoform W, isoform X and isoform Y becomes restricted during later stages; starting from stage 14 to 16, isoform W, isoform X and isoform Y are expressed in muscle. From stages 14 and 15, isoform W and isoform Y are expressed in the gut. For some isoforms, expression is also seen in specific types of cells in the embryo; isoform O is expressed in the ventral furrow at stage 5 and in the dorsal epidermis from stage 7. Isoform Y shows prominent expression in the gonad starting at stage 15.

The protein localises to the nucleus. In terms of biological role, putative transcription factor required for axon growth and guidance in the central and peripheral nervous systems. Repels CNS axons away from the midline by promoting the expression of the midline repellent sli and its receptor robo. This chain is Longitudinals lacking protein, isoforms N/O/W/X/Y, found in Drosophila melanogaster (Fruit fly).